The primary structure comprises 275 residues: 4-hydroxy-3-methylbut-2-enyl diphosphate reductase (275 aa).

C12 lines the [4Fe-4S] cluster pocket. (2E)-4-hydroxy-3-methylbut-2-enyl diphosphate is bound by residues H40 and H70. Dimethylallyl diphosphate contacts are provided by H40 and H70. H40 and H70 together coordinate isopentenyl diphosphate. C92 lines the [4Fe-4S] cluster pocket. H119 contributes to the (2E)-4-hydroxy-3-methylbut-2-enyl diphosphate binding site. H119 is a binding site for dimethylallyl diphosphate. H119 contacts isopentenyl diphosphate. Catalysis depends on E121, which acts as the Proton donor. A (2E)-4-hydroxy-3-methylbut-2-enyl diphosphate-binding site is contributed by T151. C181 lines the [4Fe-4S] cluster pocket. (2E)-4-hydroxy-3-methylbut-2-enyl diphosphate contacts are provided by S209, S210, N211, and S251. Residues S209, S210, N211, and S251 each coordinate dimethylallyl diphosphate. Positions 209, 210, 211, and 251 each coordinate isopentenyl diphosphate.

It belongs to the IspH family. [4Fe-4S] cluster is required as a cofactor.

The catalysed reaction is isopentenyl diphosphate + 2 oxidized [2Fe-2S]-[ferredoxin] + H2O = (2E)-4-hydroxy-3-methylbut-2-enyl diphosphate + 2 reduced [2Fe-2S]-[ferredoxin] + 2 H(+). The enzyme catalyses dimethylallyl diphosphate + 2 oxidized [2Fe-2S]-[ferredoxin] + H2O = (2E)-4-hydroxy-3-methylbut-2-enyl diphosphate + 2 reduced [2Fe-2S]-[ferredoxin] + 2 H(+). It participates in isoprenoid biosynthesis; dimethylallyl diphosphate biosynthesis; dimethylallyl diphosphate from (2E)-4-hydroxy-3-methylbutenyl diphosphate: step 1/1. It functions in the pathway isoprenoid biosynthesis; isopentenyl diphosphate biosynthesis via DXP pathway; isopentenyl diphosphate from 1-deoxy-D-xylulose 5-phosphate: step 6/6. Functionally, catalyzes the conversion of 1-hydroxy-2-methyl-2-(E)-butenyl 4-diphosphate (HMBPP) into a mixture of isopentenyl diphosphate (IPP) and dimethylallyl diphosphate (DMAPP). Acts in the terminal step of the DOXP/MEP pathway for isoprenoid precursor biosynthesis. The sequence is that of 4-hydroxy-3-methylbut-2-enyl diphosphate reductase from Thermotoga petrophila (strain ATCC BAA-488 / DSM 13995 / JCM 10881 / RKU-1).